Here is a 510-residue protein sequence, read N- to C-terminus: MPRGFLVKRSKKSTPVSYRVRGGEDGDRALLLSPSCGGARAEPPAPSPVPGPLPPPPPAERAHAALAAALACAPGPQPPPQGPRAAHFGNPEAAHPAPLYSPTRPVSREHEKHKYFERSFNLGSPVSAESFPTPAALLGGGGGGGASGAGGGGTCGGDPLLFAPAELKMGTAFSAGAEAARGPGPGPPLPPAAALRPPGKRPPPPTAAEPPAKAVKAPGAKKPKAIRKLHFEDEVTTSPVLGLKIKEGPVEAPRGRAGGAARPLGEFICQLCKEEYADPFALAQHKCSRIVRVEYRCPECAKVFSCPANLASHRRWHKPRPAPAAARAPEPEAAARAEAREAPGGGSDRDTPSPGGVSESGSEDGLYECHHCAKKFRRQAYLRKHLLAHHQALQAKGAPLAPPAEDLLALYPGPDEKAPQEAAGDGEGAGVLGLSASAECHLCPVCGESFASKGAQERHLRLLHAAQVFPCKYCPATFYSSPGLTRHINKCHPSENRQVILLQVPVRPAC.

Basic residues predominate over residues 1 to 12; sequence MPRGFLVKRSKK. The tract at residues 1 to 20 is SNAG domain; it reads MPRGFLVKRSKKSTPVSYRV. Disordered regions lie at residues 1-110 and 176-226; these read MPRG…SREH and GAEA…PKAI. The segment at 2–7 is required and sufficient for interaction with KDM1A; that stretch reads PRGFLV. A necessary for interaction with CCND1 region spans residues 43–58; sequence PPAPSPVPGPLPPPPP. Positions 43-59 are enriched in pro residues; sequence PPAPSPVPGPLPPPPPA. Composition is skewed to low complexity over residues 64–74 and 209–218; these read AALAAALACAP and EPPAKAVKAP. The C2H2-type 1; atypical zinc finger occupies 267-287; sequence FICQLCKEEYADPFALAQHKC. A C2H2-type 2 zinc finger spans residues 295-317; that stretch reads YRCPECAKVFSCPANLASHRRWH. Positions 315-362 are disordered; sequence RWHKPRPAPAAARAPEPEAAARAEAREAPGGGSDRDTPSPGGVSESGS. Residues 329-351 are compositionally biased toward basic and acidic residues; sequence PEPEAAARAEAREAPGGGSDRDT. 3 C2H2-type zinc fingers span residues 367–389, 441–464, and 469–492; these read YECHHCAKKFRRQAYLRKHLLAH, HLCPVCGESFASKGAQERHLRLLH, and FPCKYCPATFYSSPGLTRHINKCH.

Belongs to the INSM1 family. Interacts (via the SNAG domain) with HDAC1. Interacts (via the SNAG domain) with HDAC2. Interacts (via the SNAG domain) with KDM1A. Interacts (via the SNAG domain) with RCOR1. Interacts with SORBS1. Interacts (via the N-terminal region) with CCND1 (via cyclin N-terminal domain); the interaction competes with the binding of CCND1 to CDK4 during cell cycle progression and increases its transcriptional repressor activity. Interacts with HDAC3; the interaction increases its transcriptional repressor activity. Expressed in pancreatic duct cells. Expressed in several tumor cell lines of neuroendocrine origin including pheochromocytoma, medullary thyroid carcinoma, insulinoma, medulloblastoma, retinoblastoma, pheochromacytoma, medullary thyroid carcinoma and small cell lung carcinoma.

The protein localises to the nucleus. Its function is as follows. Sequence-specific DNA-binding transcriptional regulator that plays a key role in neurogenesis and neuroendocrine cell differentiation during embryonic and/or fetal development. Binds to the consensus sequence 5'-[TG][TC][TC][TT][GA]GGG[CG]A-3' in target promoters. Acts as a transcriptional repressor of NEUROD1 and INS expression via its interaction with cyclin CCND1 in a cell cycle-independent manner. Negatively regulates skeletal muscle-specific gene expression in endocrine cells of the pituitary by inhibiting the Notch signaling pathway. Represses target gene transcription by recruiting chromatin-modifying factors, such as HDAC1, HDAC2, HDAC3, KDM1A and RCOR1 histone deacetylases. Binds to its own promoter, suggesting autoregulation as a self-control feedback mechanism. Competes with histone H3 for the same binding site on the histone demethylase complex formed by KDM1A and RCOR1, and thereby inhibits demethylation of histone H3 at 'Lys-4'. Promotes the generation and expansion of neuronal basal progenitor cells in the developing neocortex. Involved in the differentiation of endocrine cells of the developing anterior pituitary gland, of the pancreas and intestine, and of sympatho-adrenal cells in the peripheral nervous system. Promotes cell cycle signaling arrest and inhibition of cellular proliferation. This chain is Insulinoma-associated protein 1 (INSM1), found in Homo sapiens (Human).